The primary structure comprises 519 residues: Zinc finger and BTB domain-containing protein 18.3 (519 aa).

In terms of domain architecture, BTB spans 24 to 91; it reads CDCTVLVGDA…MYEGKLQFKD (68 aa). The segment at 189–227 is disordered; that stretch reads ASIPQTGGEVDTHTTAAGKTADSPCSSTGSLSHRSATSM. The segment covering 201-227 has biased composition (polar residues); the sequence is HTTAAGKTADSPCSSTGSLSHRSATSM. C2H2-type zinc fingers lie at residues 367-389, 407-429, 435-457, and 463-486; these read FMCP…LSTH, PTCS…ERTH, FTCT…AVVH, and HACK…RKFH.

Belongs to the krueppel C2H2-type zinc-finger protein family. ZBTB18 subfamily.

Its subcellular location is the nucleus. Functionally, transcriptional repressor that plays a role in various developmental processes. Specifically binds the consensus DNA sequence 5'-[AC]ACATCTG[GT][AC]-3' which contains the E box core, and acts by recruiting chromatin remodeling multiprotein complexes. The polypeptide is Zinc finger and BTB domain-containing protein 18.3 (zbtb18.3) (Xenopus laevis (African clawed frog)).